A 474-amino-acid polypeptide reads, in one-letter code: MTKKLHIKTWGCQMNEYDSSKMADLLDATHGYQLTDVAEEADVLLLNTCSIREKAQEKVFHQLGRWKLLKEKNPDLIIGVGGCVASQEGEHIRQRAHYVDIIFGPQTLHRLPEMINSVRGDRSPVVDISFPEIEKFDRLPEPRAEGPTAFVSIMEGCNKYCTYCVVPYTRGEEVSRPSDDILFEIAQLAAQGVREVNLLGQNVNAWRGENYDGTTGTFADLLRLVAAIDGIDRIRFTTSHPIEFTDDIIEVYRDTPELVSFLHLPVQSGSDRILNLMGRTHTALEYKAIIRKLRAARPDIQISSDFIVGFPGETTEDFEKTMKLIADVNFDMSYSFIFSARPGTPAADMVDDVPEEEKKQRLYILQERINQQAMAWSRRMLGTTQRILVEGTSRKSIMELSGRTENNRVVNFEGTPDMIGKFVDVEITDVYPNSLRGKVVRTEDEMGLRVAETPESVIARTRKENDLGVGYYQP.

The 118-residue stretch at 3–120 folds into the MTTase N-terminal domain; it reads KKLHIKTWGC…LPEMINSVRG (118 aa). The [4Fe-4S] cluster site is built by Cys12, Cys49, Cys83, Cys157, Cys161, and Cys164. The Radical SAM core domain occupies 143–375; sequence RAEGPTAFVS…QERINQQAMA (233 aa). Residues 378–441 form the TRAM domain; sequence RRMLGTTQRI…PNSLRGKVVR (64 aa).

This sequence belongs to the methylthiotransferase family. MiaB subfamily. In terms of assembly, monomer. Requires [4Fe-4S] cluster as cofactor.

It is found in the cytoplasm. The catalysed reaction is N(6)-dimethylallyladenosine(37) in tRNA + (sulfur carrier)-SH + AH2 + 2 S-adenosyl-L-methionine = 2-methylsulfanyl-N(6)-dimethylallyladenosine(37) in tRNA + (sulfur carrier)-H + 5'-deoxyadenosine + L-methionine + A + S-adenosyl-L-homocysteine + 2 H(+). Functionally, catalyzes the methylthiolation of N6-(dimethylallyl)adenosine (i(6)A), leading to the formation of 2-methylthio-N6-(dimethylallyl)adenosine (ms(2)i(6)A) at position 37 in tRNAs that read codons beginning with uridine. This Escherichia coli O81 (strain ED1a) protein is tRNA-2-methylthio-N(6)-dimethylallyladenosine synthase.